The sequence spans 285 residues: Pantothenate synthetase (285 aa).

30-37 provides a ligand contact to ATP; sequence MGNLHDGH. The active-site Proton donor is His37. A (R)-pantoate-binding site is contributed by Gln61. Residue Gln61 coordinates beta-alanine. ATP is bound at residue 148–151; the sequence is GEKD. Gln154 serves as a coordination point for (R)-pantoate. An ATP-binding site is contributed by 185-188; sequence RSSR.

The protein belongs to the pantothenate synthetase family. Homodimer.

It localises to the cytoplasm. It carries out the reaction (R)-pantoate + beta-alanine + ATP = (R)-pantothenate + AMP + diphosphate + H(+). The protein operates within cofactor biosynthesis; (R)-pantothenate biosynthesis; (R)-pantothenate from (R)-pantoate and beta-alanine: step 1/1. Catalyzes the condensation of pantoate with beta-alanine in an ATP-dependent reaction via a pantoyl-adenylate intermediate. The protein is Pantothenate synthetase of Alcanivorax borkumensis (strain ATCC 700651 / DSM 11573 / NCIMB 13689 / SK2).